Consider the following 179-residue polypeptide: Ribosome maturation factor RimM (179 aa).

The PRC barrel domain maps to 102–179 (DGEYYWYQLE…EMKVEWDADF (78 aa)).

It belongs to the RimM family. In terms of assembly, binds ribosomal protein uS19.

The protein resides in the cytoplasm. Functionally, an accessory protein needed during the final step in the assembly of 30S ribosomal subunit, possibly for assembly of the head region. Essential for efficient processing of 16S rRNA. May be needed both before and after RbfA during the maturation of 16S rRNA. It has affinity for free ribosomal 30S subunits but not for 70S ribosomes. The chain is Ribosome maturation factor RimM from Pseudomonas syringae pv. tomato (strain ATCC BAA-871 / DC3000).